Consider the following 305-residue polypeptide: Sulfate adenylyltransferase subunit 2 (305 aa).

This sequence belongs to the PAPS reductase family. CysD subfamily. In terms of assembly, heterodimer composed of CysD, the smaller subunit, and CysN.

The enzyme catalyses sulfate + ATP + H(+) = adenosine 5'-phosphosulfate + diphosphate. Its pathway is sulfur metabolism; hydrogen sulfide biosynthesis; sulfite from sulfate: step 1/3. Its function is as follows. With CysN forms the ATP sulfurylase (ATPS) that catalyzes the adenylation of sulfate producing adenosine 5'-phosphosulfate (APS) and diphosphate, the first enzymatic step in sulfur assimilation pathway. APS synthesis involves the formation of a high-energy phosphoric-sulfuric acid anhydride bond driven by GTP hydrolysis by CysN coupled to ATP hydrolysis by CysD. This Pseudomonas fluorescens (strain Pf0-1) protein is Sulfate adenylyltransferase subunit 2.